Consider the following 154-residue polypeptide: Myoglobin (154 aa).

One can recognise a Globin domain in the interval 2-148; sequence GLSDGEWQLV…FRNDMAAKYK (147 aa). Ser-4 is subject to Phosphoserine. His-65 provides a ligand contact to nitrite. O2 is bound at residue His-65. Thr-68 bears the Phosphothreonine mark. His-94 serves as a coordination point for heme b.

This sequence belongs to the globin family. Monomeric.

It localises to the cytoplasm. The protein localises to the sarcoplasm. The enzyme catalyses Fe(III)-heme b-[protein] + nitric oxide + H2O = Fe(II)-heme b-[protein] + nitrite + 2 H(+). It carries out the reaction H2O2 + AH2 = A + 2 H2O. In terms of biological role, monomeric heme protein which primary function is to store oxygen and facilitate its diffusion within muscle tissues. Reversibly binds oxygen through a pentacoordinated heme iron and enables its timely and efficient release as needed during periods of heightened demand. Depending on the oxidative conditions of tissues and cells, and in addition to its ability to bind oxygen, it also has a nitrite reductase activity whereby it regulates the production of bioactive nitric oxide. Under stress conditions, like hypoxia and anoxia, it also protects cells against reactive oxygen species thanks to its pseudoperoxidase activity. The chain is Myoglobin (MB) from Saimiri sciureus (Common squirrel monkey).